A 102-amino-acid chain; its full sequence is Small ribosomal subunit protein uS10 (102 aa).

This sequence belongs to the universal ribosomal protein uS10 family. As to quaternary structure, part of the 30S ribosomal subunit.

Functionally, involved in the binding of tRNA to the ribosomes. The chain is Small ribosomal subunit protein uS10 from Paracoccus denitrificans (strain Pd 1222).